A 226-amino-acid chain; its full sequence is 7-cyano-7-deazaguanine synthase (226 aa).

8–18 (LSGGLDSTTVL) is a binding site for ATP. Cys190, Cys198, Cys201, and Cys204 together coordinate Zn(2+).

Belongs to the QueC family. As to quaternary structure, homodimer. The cofactor is Zn(2+).

It carries out the reaction 7-carboxy-7-deazaguanine + NH4(+) + ATP = 7-cyano-7-deazaguanine + ADP + phosphate + H2O + H(+). Its pathway is purine metabolism; 7-cyano-7-deazaguanine biosynthesis. Catalyzes the ATP-dependent conversion of 7-carboxy-7-deazaguanine (CDG) to 7-cyano-7-deazaguanine (preQ(0)). This chain is 7-cyano-7-deazaguanine synthase, found in Clostridium kluyveri (strain ATCC 8527 / DSM 555 / NBRC 12016 / NCIMB 10680 / K1).